We begin with the raw amino-acid sequence, 96 residues long: DNA-directed RNA polymerase subunit Rpo11 (96 aa).

This sequence belongs to the archaeal Rpo11/eukaryotic RPB11/RPC19 RNA polymerase subunit family. As to quaternary structure, part of the RNA polymerase complex.

The protein resides in the cytoplasm. It catalyses the reaction RNA(n) + a ribonucleoside 5'-triphosphate = RNA(n+1) + diphosphate. Its function is as follows. DNA-dependent RNA polymerase (RNAP) catalyzes the transcription of DNA into RNA using the four ribonucleoside triphosphates as substrates. The protein is DNA-directed RNA polymerase subunit Rpo11 of Methanococcus maripaludis (strain DSM 14266 / JCM 13030 / NBRC 101832 / S2 / LL).